A 410-amino-acid chain; its full sequence is Lissencephaly-1 homolog (410 aa).

The 33-residue stretch at Gln7 to Asn39 folds into the LisH domain. A coiled-coil region spans residues Lys32 to Gly82. WD repeat units follow at residues Gly106–Lys147, Gly148–His189, Gly190–Thr229, Gly232–Glu271, Glu274–Thr333, Gly336–Thr375, and Ala378–Arg410.

The protein belongs to the WD repeat LIS1/nudF family. In terms of assembly, can self-associate. Component of the cytosolic PAF-AH (I) heterotetrameric enzyme, which is composed of PAFAH1B1 (beta), PAFAH1B2 (alpha2) and PAFAH1B3 (alpha1) subunits. The catalytic activity of the enzyme resides in the alpha1 (PAFAH1B3) and alpha2 (PAFAH1B2) subunits, whereas the beta subunit (PAFAH1B1) has regulatory activity. Trimer formation is not essential for the catalytic activity. Interacts with dynein, dynactin, nde1 and ndel1.

It localises to the cytoplasm. The protein localises to the cytoskeleton. It is found in the microtubule organizing center. The protein resides in the centrosome. Functionally, regulatory subunit (beta subunit) of the cytosolic type I platelet-activating factor (PAF) acetylhydrolase (PAF-AH (I)), an enzyme that catalyzes the hydrolyze of the acetyl group at the sn-2 position of PAF and its analogs and participates in the PAF inactivation. Positively regulates the activity of the minus-end directed microtubule motor protein dynein. May enhance dynein-mediated microtubule sliding by targeting dynein to the microtubule plus end. Required for several dynein- and microtubule-dependent processes such as the maintenance of Golgi integrity, the peripheral transport of microtubule fragments and the coupling of the nucleus and centrosome. May be required for proliferation of neuronal precursors and neuronal migration. The protein is Lissencephaly-1 homolog (pafah1b1) of Tetraodon nigroviridis (Spotted green pufferfish).